A 181-amino-acid polypeptide reads, in one-letter code: Organelle RRM domain-containing protein 6, chloroplastic (181 aa).

The transit peptide at 1–44 (MAISLGRVVVPSCTISGDRLFIPNFSAICSVSCGRINVGTGVIS) directs the protein to the chloroplast. Residues 77–155 (TKLYVSGLSF…RVIFVEEAKT (79 aa)) form the RRM domain. The span at 155 to 169 (TRSDMSRAKPRRDFP) shows a compositional bias: basic and acidic residues. The tract at residues 155–181 (TRSDMSRAKPRRDFPKPQSKPRTFRTW) is disordered.

Interacts with MORF8/RIP1, MORF2/RIP2, MORF9/RIP9 and VAR3/OZ1.

It is found in the plastid. It localises to the chloroplast. In terms of biological role, involved in C-to-U editing of chloroplastic RNA. Required for the photosynthetic subunit psbF transcript editing in chloroplast. This Arabidopsis thaliana (Mouse-ear cress) protein is Organelle RRM domain-containing protein 6, chloroplastic.